The sequence spans 82 residues: ATP synthase subunit c (82 aa).

The next 2 membrane-spanning stretches (helical) occupy residues 3–23 and 57–77; these read PLVA…ASLG and LAFM…LLFA.

Belongs to the ATPase C chain family. As to quaternary structure, F-type ATPases have 2 components, F(1) - the catalytic core - and F(0) - the membrane proton channel. F(1) has five subunits: alpha(3), beta(3), gamma(1), delta(1), epsilon(1). F(0) has four main subunits: a(1), b(1), b'(1) and c(10-14). The alpha and beta chains form an alternating ring which encloses part of the gamma chain. F(1) is attached to F(0) by a central stalk formed by the gamma and epsilon chains, while a peripheral stalk is formed by the delta, b and b' chains.

The protein resides in the cellular thylakoid membrane. Its function is as follows. F(1)F(0) ATP synthase produces ATP from ADP in the presence of a proton or sodium gradient. F-type ATPases consist of two structural domains, F(1) containing the extramembraneous catalytic core and F(0) containing the membrane proton channel, linked together by a central stalk and a peripheral stalk. During catalysis, ATP synthesis in the catalytic domain of F(1) is coupled via a rotary mechanism of the central stalk subunits to proton translocation. Key component of the F(0) channel; it plays a direct role in translocation across the membrane. A homomeric c-ring of between 10-14 subunits forms the central stalk rotor element with the F(1) delta and epsilon subunits. The chain is ATP synthase subunit c from Synechococcus sp. (strain PCC 6716).